The following is a 145-amino-acid chain: D-aminoacyl-tRNA deacylase (145 aa).

The short motif at 137 to 138 (GP) is the Gly-cisPro motif, important for rejection of L-amino acids element.

The protein belongs to the DTD family. Homodimer.

It localises to the cytoplasm. It carries out the reaction glycyl-tRNA(Ala) + H2O = tRNA(Ala) + glycine + H(+). The enzyme catalyses a D-aminoacyl-tRNA + H2O = a tRNA + a D-alpha-amino acid + H(+). An aminoacyl-tRNA editing enzyme that deacylates mischarged D-aminoacyl-tRNAs. Also deacylates mischarged glycyl-tRNA(Ala), protecting cells against glycine mischarging by AlaRS. Acts via tRNA-based rather than protein-based catalysis; rejects L-amino acids rather than detecting D-amino acids in the active site. By recycling D-aminoacyl-tRNA to D-amino acids and free tRNA molecules, this enzyme counteracts the toxicity associated with the formation of D-aminoacyl-tRNA entities in vivo and helps enforce protein L-homochirality. This chain is D-aminoacyl-tRNA deacylase, found in Salmonella enteritidis PT4 (strain P125109).